A 444-amino-acid chain; its full sequence is Flagellum-specific ATP synthase (444 aa).

Alanine 164–serine 171 is a binding site for ATP.

The protein belongs to the ATPase alpha/beta chains family.

Its subcellular location is the cytoplasm. The catalysed reaction is ATP + H2O + 4 H(+)(in) = ADP + phosphate + 5 H(+)(out). In terms of biological role, probable catalytic subunit of a protein translocase for flagellum-specific export, or a proton translocase involved in local circuits at the flagellum. The chain is Flagellum-specific ATP synthase (fliI) from Caulobacter vibrioides (strain ATCC 19089 / CIP 103742 / CB 15) (Caulobacter crescentus).